The following is a 65-amino-acid chain: Large ribosomal subunit protein bL35 (65 aa).

A compositionally biased stretch (basic residues) spans 1–43 (MPKMKTRRGAAKRFAKTGSGKFKRRKQGLRHILTKKTAKRKSR). The tract at residues 1–49 (MPKMKTRRGAAKRFAKTGSGKFKRRKQGLRHILTKKTAKRKSRLGQSAT) is disordered.

The protein belongs to the bacterial ribosomal protein bL35 family.

The sequence is that of Large ribosomal subunit protein bL35 from Maridesulfovibrio salexigens (strain ATCC 14822 / DSM 2638 / NCIMB 8403 / VKM B-1763) (Desulfovibrio salexigens).